A 323-amino-acid chain; its full sequence is Sphingolipid delta(4)-desaturase DES1 (323 aa).

The N-myristoyl glycine moiety is linked to residue Gly2. 2 helical membrane passes run 41–61 and 68–88; these read SNLIWIVIMMVLTQFVAFYLV and WVLFWAYAFGSCVNHSMTLAI. The Histidine box-1 signature appears at 89-93; that stretch reads HEVSH. A helical transmembrane segment spans residues 102-122; sequence AMWNRWFGIFANLPIGVPYSV. The short motif at 128 to 132 is the Histidine box-2 element; sequence HMDHH. 3 helical membrane passes run 152–172, 184–204, and 209–229; these read FFCTTFRKFIWVILQPLFYAF, YLEIINTVIQITFDIVVYYVL, and LVYMLAASLFGLGLHPISGHF. A Histidine box-3 motif is present at residues 259 to 263; the sequence is HNEHH. Ser307 is subject to Phosphoserine.

This sequence belongs to the fatty acid desaturase type 1 family. DEGS subfamily. Interacts with RLBP1; the interaction increases synthesis of chromophore-precursors by DEGS1. Myristoylation can target the enzyme to the mitochondria leading to an increase in ceramide levels.

It localises to the mitochondrion membrane. The protein localises to the endoplasmic reticulum membrane. The catalysed reaction is an N-acylsphinganine + 2 Fe(II)-[cytochrome b5] + O2 + 2 H(+) = an N-acylsphing-4-enine + 2 Fe(III)-[cytochrome b5] + 2 H2O. It catalyses the reaction all-trans-retinol = 11-cis-retinol. The enzyme catalyses all-trans-retinol = 9-cis-retinol. It carries out the reaction all-trans-retinol = 13-cis-retinol. The catalysed reaction is 11-cis-retinol = 13-cis-retinol. It catalyses the reaction 11-cis-retinol = 9-cis-retinol. Has sphingolipid-delta-4-desaturase activity. Converts D-erythro-sphinganine to D-erythro-sphingosine (E-sphing-4-enine). Catalyzes the equilibrium isomerization of retinols. This chain is Sphingolipid delta(4)-desaturase DES1 (DEGS1), found in Bos taurus (Bovine).